A 65-amino-acid chain; its full sequence is MSGHEQQRPSRREEDVEETPVVPAQAGAQAKESDADVDALLDEIDEVLESNSEEFVRGFVQKGGQ.

The segment covering 1–14 (MSGHEQQRPSRREE) has biased composition (basic and acidic residues). Positions 1-35 (MSGHEQQRPSRREEDVEETPVVPAQAGAQAKESDA) are disordered. Positions 21-59 (VVPAQAGAQAKESDADVDALLDEIDEVLESNSEEFVRGF) are ARC ATPase binding. Residues 26–49 (AGAQAKESDADVDALLDEIDEVLE) adopt a coiled-coil conformation. The residue at position 65 (glutamine 65) is a Deamidated glutamine. An Isoglutamyl lysine isopeptide (Gln-Lys) (interchain with K-? in acceptor proteins) cross-link involves residue glutamine 65.

Belongs to the prokaryotic ubiquitin-like protein family. As to quaternary structure, strongly interacts with the proteasome-associated ATPase ARC through a hydrophobic interface; the interacting region of Pup lies in its C-terminal half. There is one Pup binding site per ARC hexamer ring. In terms of processing, is modified by deamidation of its C-terminal glutamine to glutamate by the deamidase Dop, a prerequisite to the subsequent pupylation process.

It functions in the pathway protein degradation; proteasomal Pup-dependent pathway. Protein modifier that is covalently attached to lysine residues of substrate proteins, thereby targeting them for proteasomal degradation. The tagging system is termed pupylation. The chain is Prokaryotic ubiquitin-like protein Pup from Kineococcus radiotolerans (strain ATCC BAA-149 / DSM 14245 / SRS30216).